A 609-amino-acid chain; its full sequence is All-trans-retinol 13,14-reductase (609 aa).

A signal peptide spans 1–21 (MWITALLLVVLLLVVVHRVYV).

It belongs to the carotenoid/retinoid oxidoreductase family. CrtISO subfamily. NAD(+) is required as a cofactor. Requires NADP(+) as cofactor. It depends on FAD as a cofactor. In terms of tissue distribution, highly expressed in liver, kidney and heart.

The protein localises to the endoplasmic reticulum membrane. It carries out the reaction all-trans-13,14-dihydroretinol + A = all-trans-retinol + AH2. In terms of biological role, catalyzes the saturation of all-trans-retinol to all-trans-13,14-dihydroretinol. Does not exhibit any activity toward all-trans-retinoic acid, nor 9-cis, 11-cis or 13-cis-retinol isomers. May play a role in the metabolism of vitamin A. Independently of retinol conversion, may regulate liver metabolism upstream of MLXIPL/ChREBP. May play a role in adipocyte differentiation. The chain is All-trans-retinol 13,14-reductase (Retsat) from Rattus norvegicus (Rat).